A 490-amino-acid chain; its full sequence is Sulfate adenylyltransferase (490 aa).

Positions 1-165 (MTKALLKDLN…LQAVTPIRHF (165 aa)) are N-terminal. Residues 166 to 390 (DFVEYRYSPA…LRQSYPPKYS (225 aa)) form a catalytic region. Q193 contributes to the sulfate binding site. ATP-binding positions include 193–196 (QTRN) and 287–290 (GRDH). Catalysis depends on residues T194, R195, and N196. R195 lines the sulfate pocket. Sulfate is bound at residue A291. M329 contacts ATP. T356 carries the phosphothreonine modification. Residues 391-490 (QGFVLAVPAT…LSQLSDEGYL (100 aa)) form a required for oligomerization; adenylyl-sulfate kinase-like region.

It belongs to the sulfate adenylyltransferase family. Homohexamer. Dimer of trimers.

The protein localises to the cytoplasm. The catalysed reaction is sulfate + ATP + H(+) = adenosine 5'-phosphosulfate + diphosphate. The protein operates within sulfur metabolism; hydrogen sulfide biosynthesis; sulfite from sulfate: step 1/3. In terms of biological role, catalyzes the first intracellular reaction of sulfate assimilation, forming adenosine-5'-phosphosulfate (APS) from inorganic sulfate and ATP. Plays an important role in sulfate activation as a component of the biosynthesis pathway of sulfur-containing amino acids. This chain is Sulfate adenylyltransferase (sua1), found in Schizosaccharomyces pombe (strain 972 / ATCC 24843) (Fission yeast).